Here is a 761-residue protein sequence, read N- to C-terminus: T-box protein 1 (761 aa).

Disordered stretches follow at residues 1–85 (MLGR…QPLT) and 167–210 (QTDP…CSSP). 2 stretches are compositionally biased toward polar residues: residues 37–61 (DLQN…NQAG) and 167–179 (QTDP…FPQA). Low complexity-rich tracts occupy residues 180–191 (SPSDLSTTSSQS) and 198–210 (SSPS…CSSP). A DNA-binding region (T-box) is located at residues 287 to 456 (LWRKFHEHRT…HNPFAKGFRD (170 aa)). Over residues 496-510 (TTGFPCQTNPTQRSN) the composition is skewed to polar residues. 3 disordered regions span residues 496–515 (TTGF…QHEG), 545–612 (SGDA…TPAH), and 637–687 (VCSS…LLTT). Over residues 600–612 (GCERSNEKHTPAH) the composition is skewed to basic and acidic residues. Over residues 637–646 (VCSSDNSNPD) the composition is skewed to polar residues. Positions 656-687 (SPAGSGSPSVTSGTSLFTSGSSAAPSPPLLTT) are enriched in low complexity.

It localises to the nucleus. Functionally, probable transcriptional regulator involved in developmental processes. This Patiria pectinifera (Starfish) protein is T-box protein 1 (tbr1).